The sequence spans 90 residues: Co-chaperonin GroES (90 aa).

It belongs to the GroES chaperonin family. In terms of assembly, heptamer of 7 subunits arranged in a ring. Interacts with the chaperonin GroEL.

The protein resides in the cytoplasm. Functionally, together with the chaperonin GroEL, plays an essential role in assisting protein folding. The GroEL-GroES system forms a nano-cage that allows encapsulation of the non-native substrate proteins and provides a physical environment optimized to promote and accelerate protein folding. GroES binds to the apical surface of the GroEL ring, thereby capping the opening of the GroEL channel. The sequence is that of Co-chaperonin GroES from Fusobacterium nucleatum subsp. nucleatum (strain ATCC 25586 / DSM 15643 / BCRC 10681 / CIP 101130 / JCM 8532 / KCTC 2640 / LMG 13131 / VPI 4355).